The sequence spans 201 residues: FMN-dependent NADH:quinone oxidoreductase (201 aa).

FMN contacts are provided by residues Ser-9 and 16–18 (SYS).

This sequence belongs to the azoreductase type 1 family. Homodimer. FMN serves as cofactor.

It catalyses the reaction 2 a quinone + NADH + H(+) = 2 a 1,4-benzosemiquinone + NAD(+). The catalysed reaction is N,N-dimethyl-1,4-phenylenediamine + anthranilate + 2 NAD(+) = 2-(4-dimethylaminophenyl)diazenylbenzoate + 2 NADH + 2 H(+). Quinone reductase that provides resistance to thiol-specific stress caused by electrophilic quinones. Functionally, also exhibits azoreductase activity. Catalyzes the reductive cleavage of the azo bond in aromatic azo compounds to the corresponding amines. The sequence is that of FMN-dependent NADH:quinone oxidoreductase from Mesomycoplasma hyopneumoniae (strain 232) (Mycoplasma hyopneumoniae).